The following is a 553-amino-acid chain: Interleukin-20 receptor subunit alpha (553 aa).

Positions 1 to 29 (MRAPGRPALRPLPLPPLLLLLLAAPWGRA) are cleaved as a signal peptide. Topologically, residues 30 to 250 (VPCVSGGLPK…KDQSSEFKAK (221 aa)) are extracellular. Fibronectin type-III domains lie at 37–135 (LPKP…FLET) and 136–242 (QIGP…TLKD). 6 N-linked (GlcNAc...) asparagine glycosylation sites follow: asparagine 42, asparagine 83, asparagine 91, asparagine 182, asparagine 191, and asparagine 200. An intrachain disulfide couples cysteine 87 to cysteine 95. A disulfide bridge links cysteine 215 with cysteine 236. A helical membrane pass occupies residues 251–271 (IIFWYVLPVSITVFLFSVMGY). The Cytoplasmic segment spans residues 272–553 (SIYRYIHVGK…EWGLYVQMEN (282 aa)). 2 disordered regions span residues 333–353 (SSDV…PPQE) and 462–515 (QEHT…LGEE). Residues 334 to 346 (SDVSSLNDPQPSG) show a composition bias toward polar residues. The span at 499-513 (QDSEGCEPSEGDGLG) shows a compositional bias: acidic residues.

It belongs to the type II cytokine receptor family. In terms of assembly, heterodimer with IL20RB and heterodimer with IL10RB. In terms of tissue distribution, widely expressed with highest levels in skin and testis and high levels in brain. Highly expressed in psoriatic skin.

It is found in the membrane. In terms of biological role, the IL20RA/IL20RB dimer is a receptor for IL19, IL20 and IL24. The IL20RA/IL10RB dimer is a receptor for IL26. In Homo sapiens (Human), this protein is Interleukin-20 receptor subunit alpha (IL20RA).